Reading from the N-terminus, the 647-residue chain is Phosphatidylinositol polyphosphate 5-phosphatase type IV (647 aa).

3 disordered regions span residues 1–80, 101–131, and 177–196; these read MPSK…QPPI, RGSQ…PAYS, and HRDA…HASH. The stretch at 52–55 is repeat 1; the sequence is PMPP. Positions 52 to 243 are 3 X 4 AA repeats of P-X-X-P; it reads PMPPFSIPAK…AHSNLGPSRP (192 aa). Over residues 60–75 the composition is skewed to polar residues; sequence AKTSNQNPQTKANLIT. Repeat unit 2 spans residues 76–79; it reads PQPP. Ser-103 carries the phosphoserine modification. Residues 120-129 are compositionally biased toward polar residues; it reads LQDSVAQSPA. Position 197 is a phosphothreonine (Thr-197). Copy 3 of the repeat occupies 240–243; that stretch reads PSRP. Phosphoserine is present on residues Ser-245 and Ser-259. A Cysteine methyl ester modification is found at Cys-644. Cys-644 carries the S-farnesyl cysteine lipid modification. A propeptide spans 645–647 (removed in mature form); it reads TVS.

The protein belongs to the inositol polyphosphate 5-phosphatase family. Interacts (when prenylated) with PDE6D; this is important for normal location in cilia. In terms of tissue distribution, highly expressed in testis, in pachytene and diplotene spermatocytes, but not in more mature elongating spermatids. Detected in neurons throughout the brain.

Its subcellular location is the cytoplasm. The protein localises to the cytoskeleton. It is found in the cilium axoneme. It localises to the golgi apparatus. The protein resides in the golgi stack membrane. Its subcellular location is the cell projection. The protein localises to the ruffle. It is found in the cell membrane. It localises to the nucleus. It catalyses the reaction a 1,2-diacyl-sn-glycero-3-phospho-(1D-myo-inositol-4,5-bisphosphate) + H2O = a 1,2-diacyl-sn-glycero-3-phospho-(1D-myo-inositol 4-phosphate) + phosphate. The enzyme catalyses a 1,2-diacyl-sn-glycero-3-phospho-(1D-myo-inositol-3,4,5-trisphosphate) + H2O = a 1,2-diacyl-sn-glycero-3-phospho-(1D-myo-inositol-3,4-bisphosphate) + phosphate. The catalysed reaction is a 1,2-diacyl-sn-glycero-3-phospho-(1D-myo-inositol-3,5-bisphosphate) + H2O = a 1,2-diacyl-sn-glycero-3-phospho-(1D-myo-inositol-3-phosphate) + phosphate. In terms of biological role, phosphatidylinositol (PtdIns) phosphatase that specifically hydrolyzes the 5-phosphate of phosphatidylinositol-3,4,5-trisphosphate (PtdIns(3,4,5)P3), phosphatidylinositol 4,5-bisphosphate (PtdIns(4,5)P2) and phosphatidylinositol 3,5-bisphosphate (PtdIns(3,5)P2). Specific for lipid substrates, inactive towards water soluble inositol phosphates. Specific for lipid substrates, inactive towards water soluble inositol phosphates. Plays an essential role in the primary cilium by controlling ciliary growth and phosphoinositide 3-kinase (PI3K) signaling and stability. This Mus musculus (Mouse) protein is Phosphatidylinositol polyphosphate 5-phosphatase type IV (Inpp5e).